The primary structure comprises 303 residues: tRNA dimethylallyltransferase 1 (303 aa).

Residue G9–T16 participates in ATP binding. T11 to T16 provides a ligand contact to substrate. 3 interaction with substrate tRNA regions span residues D34–L37, Q158–R162, and R239–R244.

This sequence belongs to the IPP transferase family. As to quaternary structure, monomer. Requires Mg(2+) as cofactor.

It catalyses the reaction adenosine(37) in tRNA + dimethylallyl diphosphate = N(6)-dimethylallyladenosine(37) in tRNA + diphosphate. Functionally, catalyzes the transfer of a dimethylallyl group onto the adenine at position 37 in tRNAs that read codons beginning with uridine, leading to the formation of N6-(dimethylallyl)adenosine (i(6)A). The protein is tRNA dimethylallyltransferase 1 of Shewanella sediminis (strain HAW-EB3).